Consider the following 431-residue polypeptide: Probable 3-hydroxy-3-methylglutaryl-coenzyme A reductase (431 aa).

Residues glutamate 85 and aspartate 278 each act as charge relay system in the active site. Catalysis depends on histidine 375, which acts as the Proton donor.

It belongs to the HMG-CoA reductase family.

The catalysed reaction is (R)-mevalonate + 2 NAD(+) + CoA = (3S)-3-hydroxy-3-methylglutaryl-CoA + 2 NADH + 2 H(+). It functions in the pathway metabolic intermediate metabolism; (R)-mevalonate degradation; (S)-3-hydroxy-3-methylglutaryl-CoA from (R)-mevalonate: step 1/1. In terms of biological role, converts HMG-CoA to mevalonate. The chain is Probable 3-hydroxy-3-methylglutaryl-coenzyme A reductase from Borreliella burgdorferi (strain ATCC 35210 / DSM 4680 / CIP 102532 / B31) (Borrelia burgdorferi).